Reading from the N-terminus, the 400-residue chain is Argininosuccinate synthase (400 aa).

9-17 lines the ATP pocket; it reads AYSGGLDTS. Tyr87 is an L-citrulline binding site. Gly117 provides a ligand contact to ATP. The L-aspartate site is built by Thr119, Asn123, and Asp124. An L-citrulline-binding site is contributed by Asn123. The L-citrulline site is built by Arg127, Ser176, Ser185, Glu261, and Tyr273.

The protein belongs to the argininosuccinate synthase family. Type 1 subfamily. As to quaternary structure, homotetramer.

It is found in the cytoplasm. The catalysed reaction is L-citrulline + L-aspartate + ATP = 2-(N(omega)-L-arginino)succinate + AMP + diphosphate + H(+). It participates in amino-acid biosynthesis; L-arginine biosynthesis; L-arginine from L-ornithine and carbamoyl phosphate: step 2/3. The chain is Argininosuccinate synthase from Chlorobium limicola (strain DSM 245 / NBRC 103803 / 6330).